We begin with the raw amino-acid sequence, 589 residues long: Aspartate--tRNA(Asp/Asn) ligase (589 aa).

Glutamate 175 is a binding site for L-aspartate. The interval 199-202 (QQLK) is aspartate. Arginine 221 contacts L-aspartate. ATP is bound by residues 221 to 223 (RDE) and glutamine 230. L-aspartate is bound at residue histidine 451. Glutamate 485 is an ATP binding site. An L-aspartate-binding site is contributed by arginine 492. 537–540 (GIDR) contributes to the ATP binding site.

This sequence belongs to the class-II aminoacyl-tRNA synthetase family. Type 1 subfamily. As to quaternary structure, homodimer.

The protein resides in the cytoplasm. It catalyses the reaction tRNA(Asx) + L-aspartate + ATP = L-aspartyl-tRNA(Asx) + AMP + diphosphate. In terms of biological role, aspartyl-tRNA synthetase with relaxed tRNA specificity since it is able to aspartylate not only its cognate tRNA(Asp) but also tRNA(Asn). Reaction proceeds in two steps: L-aspartate is first activated by ATP to form Asp-AMP and then transferred to the acceptor end of tRNA(Asp/Asn). In Roseiflexus sp. (strain RS-1), this protein is Aspartate--tRNA(Asp/Asn) ligase.